Here is a 544-residue protein sequence, read N- to C-terminus: CTP synthase (544 aa).

An amidoligase domain region spans residues 1 to 266; that stretch reads MTKFIFVTGG…DDLICERFGL (266 aa). CTP is bound at residue Ser13. Ser13 contacts UTP. ATP-binding positions include 14–19 and Asp71; that span reads SLGKGI. Residues Asp71 and Glu140 each contribute to the Mg(2+) site. Residues 147-149, 187-192, and Lys223 contribute to the CTP site; these read DIE and KTKPTQ. UTP contacts are provided by residues 187–192 and Lys223; that span reads KTKPTQ. Positions 291 to 543 constitute a Glutamine amidotransferase type-1 domain; sequence TVAMVGKYVE…VKAAKNYSEA (253 aa). Gly354 provides a ligand contact to L-glutamine. Cys381 serves as the catalytic Nucleophile; for glutamine hydrolysis. Residues 382–385, Glu404, and Arg471 each bind L-glutamine; that span reads LGMQ. Catalysis depends on residues His516 and Glu518.

Belongs to the CTP synthase family. In terms of assembly, homotetramer.

It catalyses the reaction UTP + L-glutamine + ATP + H2O = CTP + L-glutamate + ADP + phosphate + 2 H(+). The catalysed reaction is L-glutamine + H2O = L-glutamate + NH4(+). The enzyme catalyses UTP + NH4(+) + ATP = CTP + ADP + phosphate + 2 H(+). It participates in pyrimidine metabolism; CTP biosynthesis via de novo pathway; CTP from UDP: step 2/2. With respect to regulation, allosterically activated by GTP, when glutamine is the substrate; GTP has no effect on the reaction when ammonia is the substrate. The allosteric effector GTP functions by stabilizing the protein conformation that binds the tetrahedral intermediate(s) formed during glutamine hydrolysis. Inhibited by the product CTP, via allosteric rather than competitive inhibition. Its function is as follows. Catalyzes the ATP-dependent amination of UTP to CTP with either L-glutamine or ammonia as the source of nitrogen. Regulates intracellular CTP levels through interactions with the four ribonucleotide triphosphates. This is CTP synthase from Psychrobacter cryohalolentis (strain ATCC BAA-1226 / DSM 17306 / VKM B-2378 / K5).